Reading from the N-terminus, the 410-residue chain is Phosphopentomutase (410 aa).

Asp10, Asp309, His314, Asp350, His351, and His362 together coordinate Mn(2+).

The protein belongs to the phosphopentomutase family. The cofactor is Mn(2+).

The protein localises to the cytoplasm. It carries out the reaction 2-deoxy-alpha-D-ribose 1-phosphate = 2-deoxy-D-ribose 5-phosphate. The enzyme catalyses alpha-D-ribose 1-phosphate = D-ribose 5-phosphate. The protein operates within carbohydrate degradation; 2-deoxy-D-ribose 1-phosphate degradation; D-glyceraldehyde 3-phosphate and acetaldehyde from 2-deoxy-alpha-D-ribose 1-phosphate: step 1/2. Isomerase that catalyzes the conversion of deoxy-ribose 1-phosphate (dRib-1-P) and ribose 1-phosphate (Rib-1-P) to deoxy-ribose 5-phosphate (dRib-5-P) and ribose 5-phosphate (Rib-5-P), respectively. The polypeptide is Phosphopentomutase (Aliivibrio fischeri (strain ATCC 700601 / ES114) (Vibrio fischeri)).